The primary structure comprises 332 residues: ATP-dependent 6-phosphofructokinase (332 aa).

Gly11 is an ATP binding site. 21–25 (RSVVR) serves as a coordination point for ADP. ATP is bound by residues 72–73 (RC) and 102–105 (GDGS). A Mg(2+)-binding site is contributed by Asp103. 126–128 (TID) lines the substrate pocket. The Proton acceptor role is filled by Asp128. Residue Arg155 participates in ADP binding. Substrate-binding positions include Arg163 and 170 to 172 (MGR). Residues 186–188 (GAE), Arg212, and 214–216 (KLH) each bind ADP. Substrate is bound by residues Glu223, Arg256, and 262-265 (HIQR).

This sequence belongs to the phosphofructokinase type A (PFKA) family. ATP-dependent PFK group I subfamily. Prokaryotic clade 'B1' sub-subfamily. Homotetramer. Mg(2+) serves as cofactor.

It is found in the cytoplasm. The catalysed reaction is beta-D-fructose 6-phosphate + ATP = beta-D-fructose 1,6-bisphosphate + ADP + H(+). It participates in carbohydrate degradation; glycolysis; D-glyceraldehyde 3-phosphate and glycerone phosphate from D-glucose: step 3/4. Allosterically activated by ADP and other diphosphonucleosides, and allosterically inhibited by phosphoenolpyruvate. Its function is as follows. Catalyzes the phosphorylation of D-fructose 6-phosphate to fructose 1,6-bisphosphate by ATP, the first committing step of glycolysis. The polypeptide is ATP-dependent 6-phosphofructokinase (Halothermothrix orenii (strain H 168 / OCM 544 / DSM 9562)).